We begin with the raw amino-acid sequence, 364 residues long: Glycerol dehydrogenase (364 aa).

Residues D37, G92, K93, T114, and S117 each contribute to the NAD(+) site. D119 serves as a coordination point for glycerol. 3 residues coordinate NAD(+): S123, L125, and Y129. The glycerol site is built by D169, H252, and H269. Zn(2+) is bound by residues D169, H252, and H269.

Belongs to the iron-containing alcohol dehydrogenase family. Requires Zn(2+) as cofactor.

It carries out the reaction glycerol + NAD(+) = dihydroxyacetone + NADH + H(+). It participates in polyol metabolism; glycerol fermentation; glycerone phosphate from glycerol (oxidative route): step 1/2. In terms of biological role, catalyzes the NAD-dependent oxidation of glycerol to dihydroxyacetone (glycerone). This is Glycerol dehydrogenase (gldA) from Thermotoga maritima (strain ATCC 43589 / DSM 3109 / JCM 10099 / NBRC 100826 / MSB8).